Here is a 376-residue protein sequence, read N- to C-terminus: 26S proteasome non-ATPase regulatory subunit 13 (376 aa).

A PCI domain is found at 171-338; it reads SYYKDALRFL…KRVHMTWVQP (168 aa).

Belongs to the proteasome subunit S11 family. As to quaternary structure, component of the 19S proteasome regulatory particle complex. The 26S proteasome consists of a 20S core particle (CP) and two 19S regulatory subunits (RP). The regulatory particle is made of a lid composed of 9 subunits including PSMD13, a base containing 6 ATPases and few additional components.

Its function is as follows. Component of the 26S proteasome, a multiprotein complex involved in the ATP-dependent degradation of ubiquitinated proteins. This complex plays a key role in the maintenance of protein homeostasis by removing misfolded or damaged proteins, which could impair cellular functions, and by removing proteins whose functions are no longer required. Therefore, the proteasome participates in numerous cellular processes, including cell cycle progression, apoptosis, or DNA damage repair. This is 26S proteasome non-ATPase regulatory subunit 13 (PSMD13) from Bos taurus (Bovine).